The primary structure comprises 227 residues: PKHD-type hydroxylase Veis_3084 (227 aa).

The interval 27–51 is disordered; sequence DDGKDSAGTQARQAKNNQQLPRDSE. Polar residues predominate over residues 33 to 47; the sequence is AGTQARQAKNNQQLP. Residues 78-179 enclose the Fe2OG dioxygenase domain; the sequence is RVFPPRVNRY…RMACFFWVES (102 aa). Positions 97, 99, and 160 each coordinate Fe cation. Residue Arg-170 coordinates 2-oxoglutarate.

Fe(2+) is required as a cofactor. The cofactor is L-ascorbate.

The polypeptide is PKHD-type hydroxylase Veis_3084 (Verminephrobacter eiseniae (strain EF01-2)).